The following is a 636-amino-acid chain: Tumor protein p73 (636 aa).

Residues 1 to 46 (MAQSTATSPDGGTTFEHLWSSLEPDSTYFDLPQSSRGNNEVVGGTD) are transactivation. Residue Thr27 is modified to Phosphothreonine; by PLK1. At Tyr28 the chain carries Phosphotyrosine; by SRC and HCK. A disordered region spans residues 78-104 (RAASASPYTPEHAASVPTHSPYAQPSS). The segment covering 94–104 (PTHSPYAQPSS) has biased composition (polar residues). Phosphotyrosine; by ABL1 is present on Tyr99. Positions 131 to 310 (FQQSSTAKSA…DRKADEDHYR (180 aa)) are DNA-binding. Zn(2+) is bound by residues Cys194, His197, Cys258, and Cys262. Residues 314–345 (ALNESSAKNGAASKRAFKQSPPAVPALGAGVK) are disordered. Residues 345–380 (KKRRHGDEDTYYLQVRGRENFEILMKLKESLELMEL) form an interaction with HIPK2 region. The tract at residues 345–386 (KKRRHGDEDTYYLQVRGRENFEILMKLKESLELMELVPQPLV) is oligomerization. Positions 483–487 (PPPPY) match the PPxY motif motif. One can recognise an SAM domain in the interval 485 to 551 (PPYHADPSLV…WRGLQDLKQG (67 aa)). Residue Lys627 forms a Glycyl lysine isopeptide (Lys-Gly) (interchain with G-Cter in SUMO); in isoform Alpha linkage. Lys627 is covalently cross-linked (Glycyl lysine isopeptide (Lys-Gly) (interchain with G-Cter in SUMO2)).

The protein belongs to the p53 family. Found in a complex with p53/TP53 and CABLES1. The C-terminal oligomerization domain binds to the ABL1 tyrosine kinase SH3 domain. Interacts with HECW2. Isoform Beta interacts homotypically and with p53/TP53, whereas isoform Alpha does not. Isoform Gamma interacts homotypically and with all p73 isoforms. Isoform Delta interacts with isoform Gamma, isoform Alpha, and homotypically. Isoforms Alpha and Beta interact with HIPK2. Isoform Alpha interacts with RANBP9. Isoform Beta interacts with WWOX. Interacts (via SAM domain) with FBXO45 (via B30.2/SPRY domain). Interacts with YAP1 (phosphorylated form). Interacts with HCK (via SH3 domain); this inhibits TP73 activity and degradation. Interacts (via SAM domain) with NQO1; this interaction is NADH-dependent, stabilizes TP73 in response to oxidative stress and protects it from ubiquitin-independent degradation by the 20S proteasome. As to quaternary structure, (Microbial infection) Interacts with Epstein-Barr virus protein EBNA6; this interaction inhibits TP73-mediated apoptotic pathway. The cofactor is Zn(2+). In terms of processing, isoform alpha (but not isoform beta) is sumoylated on Lys-627, which potentiates proteasomal degradation but does not affect transcriptional activity. Phosphorylation by PLK1 and PLK3 inhibits the transcription regulator activity and pro-apoptotic function. Post-translationally, higher levels of phosphorylation seen in the brain from patients with Huntington disease. Polyubiquitinated by RCHY1/PIRH2; leading to its degradation by the proteasome. Expressed in striatal neurons of patients with Huntington disease (at protein level). Brain, kidney, placenta, colon, heart, liver, spleen, skeletal muscle, prostate, thymus and pancreas. Highly expressed in fetal tissue. Expressed in the respiratory epithelium.

The protein localises to the nucleus. The protein resides in the cytoplasm. Participates in the apoptotic response to DNA damage. Isoforms containing the transactivation domain are pro-apoptotic, isoforms lacking the domain are anti-apoptotic and block the function of p53 and transactivating p73 isoforms. May be a tumor suppressor protein. Is an activator of FOXJ1 expression. It is an essential factor for the positive regulation of lung ciliated cell differentiation. This Homo sapiens (Human) protein is Tumor protein p73 (TP73).